Here is a 265-residue protein sequence, read N- to C-terminus: Tetrapyrrole-binding protein, chloroplastic (265 aa).

Residues 1–24 form a disordered region; that stretch reads MATTNSLHHHHHSSPSYTHHRNNL. The N-terminal 69 residues, 1-69, are a transit peptide targeting the chloroplast; it reads MATTNSLHHH…TAVSAVSTTN (69 aa). The span at 7 to 23 shows a compositional bias: basic residues; sequence LHHHHHSSPSYTHHRNN.

As to quaternary structure, interacts with CHLH, the protoporphyrin IX-binding subunit of Mg-chelatase. Monomer or extremely compact dimer.

It is found in the plastid. The protein resides in the chloroplast membrane. Functionally, regulates chlorophyll synthesis and plastid-to-nucleus signal transduction by binding both the product and the substrate of Mg-chelatase, an enzyme that produces magnesium-protoporphyrin IX (Mg-Proto). Also activates Mg-chelatase. Neither binds abscisic acid (ABA) nor is involved in ABA signaling. This Arabidopsis thaliana (Mouse-ear cress) protein is Tetrapyrrole-binding protein, chloroplastic (GUN4).